The sequence spans 329 residues: UDP-2,3-diacylglucosamine pyrophosphatase LpxG (329 aa).

The chain crosses the membrane as a helical span at residues 2–24 (FVSVGITASLTTILAAPVLTWVW). Asp59, His61, Asp91, Asn123, His257, and His259 together coordinate a divalent metal cation.

The protein belongs to the metallophosphoesterase superfamily. LpxG family. Mn(2+) serves as cofactor.

Its subcellular location is the cell inner membrane. It carries out the reaction UDP-2,3-diacyl-alpha-D-glucosamine + H2O = 2,3-diacyl-alpha-D-glucosaminyl 1-phosphate + UMP + 2 H(+). It participates in glycolipid biosynthesis; lipid IV(A) biosynthesis. Hydrolyzes the pyrophosphate bond of UDP-2,3-diacylglucosamine to form 2,3-diacylglucosamine 1-phosphate (lipid X) and UMP by catalyzing the attack of water at the alpha-P atom. Involved in the biosynthesis of lipid A, a phosphorylated glycolipid that anchors the lipooligosaccharide (LOS) to the outer membrane of the cell. Can functionally complement lpxH deficiency in E.coli. Overexpression of LpxG results in toxic accumulation of lipid X and profoundly reduces the infectivity of C.trachomatis. Can utilize UDP-2-N,3-O-bis((3R)-3-hydroxytetradecanoyl)-alpha-D-glucosamine as substrate in vitro, but the substrate is likely UDP-2-N-((3R)-3-hydroxyicosanoyl),3-O-(tetradecanoyl)-alpha-D-glucosamine in vivo. The sequence is that of UDP-2,3-diacylglucosamine pyrophosphatase LpxG from Chlamydia trachomatis serovar D (strain ATCC VR-885 / DSM 19411 / UW-3/Cx).